The sequence spans 296 residues: Probable lipid kinase YegS-like (296 aa).

The DAGKc domain maps to 1–130 (MPHTLLILNG…IDLAQVNGEH (130 aa)). Residues Thr37, 63-69 (GDGTINE), and Thr92 each bind ATP. Mg(2+)-binding residues include Leu212, Asp215, and Leu217. Glu268 functions as the Proton acceptor in the catalytic mechanism.

It belongs to the diacylglycerol/lipid kinase family. YegS lipid kinase subfamily. It depends on Mg(2+) as a cofactor. Ca(2+) is required as a cofactor.

The protein resides in the cytoplasm. Functionally, probably phosphorylates lipids; the in vivo substrate is unknown. In Yersinia pestis bv. Antiqua (strain Angola), this protein is Probable lipid kinase YegS-like.